We begin with the raw amino-acid sequence, 187 residues long: UPF0340 protein SPT_0687 (187 aa).

Belongs to the UPF0340 family.

This is UPF0340 protein SPT_0687 from Streptococcus pneumoniae (strain Taiwan19F-14).